Consider the following 344-residue polypeptide: Fructose-1,6-bisphosphatase class 1 (344 aa).

E90, D109, L111, and D112 together coordinate Mg(2+). Substrate-binding positions include 112–115 (DGSS) and N200. A Mg(2+)-binding site is contributed by E271.

Belongs to the FBPase class 1 family. In terms of assembly, homotetramer. It depends on Mg(2+) as a cofactor.

Its subcellular location is the cytoplasm. The enzyme catalyses beta-D-fructose 1,6-bisphosphate + H2O = beta-D-fructose 6-phosphate + phosphate. Its pathway is carbohydrate biosynthesis; gluconeogenesis. The protein is Fructose-1,6-bisphosphatase class 1 of Nitrobacter vulgaris.